The chain runs to 198 residues: MKSIEELYKRALELKNKGMSDKEISTELHLSVNTVTWLLSKEFLKEGAVQDVKIGWRSVGVFGSRIISIAEIMSDIIREEMNKNSFEVDSILGIAINGIPYATLVSYLMDKELIVYRPHPARKEGVFSSNFASVEGKRVVIIDDVASTGETMRRTITDVTKEGGKPVLCVLLASKMSVNDLNGVPVRSLIRTQVIGGS.

It belongs to the purine/pyrimidine phosphoribosyltransferase family. GfcR subfamily.

The chain is Transcriptional regulator GfcR from Thermoplasma acidophilum (strain ATCC 25905 / DSM 1728 / JCM 9062 / NBRC 15155 / AMRC-C165).